The primary structure comprises 501 residues: Ribonuclease Y (501 aa).

The chain crosses the membrane as a helical span at residues 7–27; that stretch reads LVVIALLGALTLLTAGHVLAL. The region spanning 190–256 is the KH domain; sequence VVRAVPLPEE…RLTLEKLVAD (67 aa). One can recognise an HD domain in the interval 316-409; the sequence is VLAHLVESAH…TQAADAISGG (94 aa).

The protein belongs to the RNase Y family.

The protein localises to the cell membrane. In terms of biological role, endoribonuclease that initiates mRNA decay. The protein is Ribonuclease Y of Thermobifida fusca (strain YX).